We begin with the raw amino-acid sequence, 198 residues long: Putative pseudouridine methyltransferase (198 aa).

Residues methionine 132 and cysteine 186 each contribute to the S-adenosyl-L-methionine site.

Belongs to the methyltransferase superfamily. TrmY family.

The protein localises to the cytoplasm. This is Putative pseudouridine methyltransferase from Shewanella baltica (strain OS185).